Consider the following 214-residue polypeptide: Urease accessory protein UreF (214 aa).

The segment at 70 to 95 (AAAGEAGDAETDARTPSPAARAASRA) is disordered. The segment covering 83 to 95 (RTPSPAARAASRA) has biased composition (low complexity).

Belongs to the UreF family. In terms of assembly, ureD, UreF and UreG form a complex that acts as a GTP-hydrolysis-dependent molecular chaperone, activating the urease apoprotein by helping to assemble the nickel containing metallocenter of UreC. The UreE protein probably delivers the nickel.

The protein localises to the cytoplasm. Its function is as follows. Required for maturation of urease via the functional incorporation of the urease nickel metallocenter. This is Urease accessory protein UreF from Mycolicibacterium vanbaalenii (strain DSM 7251 / JCM 13017 / BCRC 16820 / KCTC 9966 / NRRL B-24157 / PYR-1) (Mycobacterium vanbaalenii).